A 211-amino-acid polypeptide reads, in one-letter code: uncharacterized protein (211 aa).

Residues 105–143 (IEENEFDKVRKSSDKLINEIEKTKSSLREDVKTALSEVR) adopt a coiled-coil conformation. A helical membrane pass occupies residues 191-211 (QWFTGFVGVVSSVVLIILFYF).

Belongs to the CCDC90 family.

The protein localises to the mitochondrion. The protein resides in the membrane. This is an uncharacterized protein from Schizosaccharomyces pombe (strain 972 / ATCC 24843) (Fission yeast).